We begin with the raw amino-acid sequence, 102 residues long: Large ribosomal subunit protein uL24 (102 aa).

It belongs to the universal ribosomal protein uL24 family. In terms of assembly, part of the 50S ribosomal subunit.

One of two assembly initiator proteins, it binds directly to the 5'-end of the 23S rRNA, where it nucleates assembly of the 50S subunit. Functionally, one of the proteins that surrounds the polypeptide exit tunnel on the outside of the subunit. The protein is Large ribosomal subunit protein uL24 of Rhizobium johnstonii (strain DSM 114642 / LMG 32736 / 3841) (Rhizobium leguminosarum bv. viciae).